Reading from the N-terminus, the 304-residue chain is Porphobilinogen deaminase (304 aa).

Cysteine 241 bears the S-(dipyrrolylmethanemethyl)cysteine mark.

The protein belongs to the HMBS family. In terms of assembly, monomer. Dipyrromethane serves as cofactor.

It carries out the reaction 4 porphobilinogen + H2O = hydroxymethylbilane + 4 NH4(+). Its pathway is porphyrin-containing compound metabolism; protoporphyrin-IX biosynthesis; coproporphyrinogen-III from 5-aminolevulinate: step 2/4. In terms of biological role, tetrapolymerization of the monopyrrole PBG into the hydroxymethylbilane pre-uroporphyrinogen in several discrete steps. The protein is Porphobilinogen deaminase of Ruthia magnifica subsp. Calyptogena magnifica.